We begin with the raw amino-acid sequence, 275 residues long: Shikimate dehydrogenase (NADP(+)) (275 aa).

Residues 19-21 and Thr-66 contribute to the shikimate site; that span reads SIS. Lys-70 functions as the Proton acceptor in the catalytic mechanism. Shikimate-binding residues include Asn-91 and Asp-106. Residues 129 to 133, 153 to 158, and Ile-219 each bind NADP(+); these read GAGGA and NRTYGR. Tyr-221 is a binding site for shikimate. Gly-242 serves as a coordination point for NADP(+).

This sequence belongs to the shikimate dehydrogenase family. In terms of assembly, homodimer.

It catalyses the reaction shikimate + NADP(+) = 3-dehydroshikimate + NADPH + H(+). The protein operates within metabolic intermediate biosynthesis; chorismate biosynthesis; chorismate from D-erythrose 4-phosphate and phosphoenolpyruvate: step 4/7. Involved in the biosynthesis of the chorismate, which leads to the biosynthesis of aromatic amino acids. Catalyzes the reversible NADPH linked reduction of 3-dehydroshikimate (DHSA) to yield shikimate (SA). The protein is Shikimate dehydrogenase (NADP(+)) of Dictyoglomus thermophilum (strain ATCC 35947 / DSM 3960 / H-6-12).